We begin with the raw amino-acid sequence, 48 residues long: Large ribosomal subunit protein bL32 (48 aa).

This sequence belongs to the bacterial ribosomal protein bL32 family.

The protein is Large ribosomal subunit protein bL32 of Helicobacter pylori (strain P12).